The primary structure comprises 155 residues: FAD synthase (155 aa).

ATP contacts are provided by residues 9–10 (TF), 14–17 (HPGH), and Asp92.

This sequence belongs to the archaeal FAD synthase family. As to quaternary structure, homodimer. A divalent metal cation is required as a cofactor.

The enzyme catalyses FMN + ATP + H(+) = FAD + diphosphate. Its pathway is cofactor biosynthesis; FAD biosynthesis; FAD from FMN: step 1/1. Functionally, catalyzes the transfer of the AMP portion of ATP to flavin mononucleotide (FMN) to produce flavin adenine dinucleotide (FAD) coenzyme. This is FAD synthase from Archaeoglobus profundus (strain DSM 5631 / JCM 9629 / NBRC 100127 / Av18).